We begin with the raw amino-acid sequence, 205 residues long: MSEHFEKRRPVFLQLGFNEAALPQLKAYLDLLWSSNEELNLISRKMTYEELIDNHVIDCLLPIKDFPKDVKVAADFGSGGGLPGVIYAIQFPNVEYHLFEKSKLKQDFLNRCVSIAPNLRIHGEIPPKLEKIEVVTSRAFKPVDVILEFSRDYYKKGGKYFLLKGRKEKIDEEVALARKKFKDLKVTVQPLSSPVLEVERHLVLI.

S-adenosyl-L-methionine is bound by residues G77, L82, 100-102 (EKS), 129-130 (LE), and R138.

Belongs to the methyltransferase superfamily. RNA methyltransferase RsmG family.

It is found in the cytoplasm. It carries out the reaction guanosine(527) in 16S rRNA + S-adenosyl-L-methionine = N(7)-methylguanosine(527) in 16S rRNA + S-adenosyl-L-homocysteine. Specifically methylates the N7 position of guanine in position 527 of 16S rRNA. This is Ribosomal RNA small subunit methyltransferase G 1 from Bdellovibrio bacteriovorus (strain ATCC 15356 / DSM 50701 / NCIMB 9529 / HD100).